A 454-amino-acid chain; its full sequence is Aquaglyceroporin-9 (454 aa).

Over 1 to 186 (MEGGLRSPLN…RHTMREPFSE (186 aa)) the chain is Cytoplasmic. Residues 187-207 (FFGVFILILFGDGVVAQVVLS) traverse the membrane as a helical segment. Residues 208 to 216 (SGERGSYQS) lie on the Extracellular side of the membrane. The helical transmembrane segment at 217–237 (ISWGWGIGVMLGVYASGVSGA) threads the bilayer. Residues 238–257 (HINPAVTFANCIFRKFPWRK) are Cytoplasmic-facing. An NPA 1 motif is present at residues 240–242 (NPA). Residues 258 to 278 (FPIYMLAQVLGAMCASGVVYA) form a helical membrane-spanning segment. Residues 279–316 (NYKSAIDMFEGGNNIRTVGLNTSSAGIFCTYPAPFMTK) lie on the Extracellular side of the membrane. An N-linked (GlcNAc...) asparagine glycan is attached at Asn-299. A helical membrane pass occupies residues 317–337 (TGQFFSEFVASTILMFCIYAL). At 338–351 (QDNGNLGSGNLTPL) the chain is on the cytoplasmic side. The chain crosses the membrane as a helical span at residues 352–372 (GLFFVIFGIGACFGWETGYAI). Residues 373-375 (NLA) carry the NPA 2 motif. Over 373 to 403 (NLARDFGPRLMSYFLGYGHEVWSAGNYYFWV) the chain is Extracellular. A helical membrane pass occupies residues 404–424 (PMVAPFIGCLFGGWLYDVFIF). The Cytoplasmic segment spans residues 425–454 (TGESPINTPWMGLKRLMPGGLGSKKVDSKV).

The protein belongs to the MIP/aquaporin (TC 1.A.8) family.

It is found in the membrane. The catalysed reaction is H2O(in) = H2O(out). It catalyses the reaction glycerol(in) = glycerol(out). Functionally, water channel required to facilitate the transport of water across membranes. May play a role in the vegetative growth and pathogenicity. The polypeptide is Aquaglyceroporin-9 (Botryotinia fuckeliana (strain B05.10) (Noble rot fungus)).